The following is a 144-amino-acid chain: HTH-type transcriptional regulator BilQ (144 aa).

Residues 1-134 enclose the HTH marR-type domain; sequence MEQTFAYYTT…LFTLLQKLGK (134 aa). The segment at residues 48–71 is a DNA-binding region (H-T-H motif); the sequence is QRELAAAVRADEGYAARSVEKLLQ.

Transcription regulator that regulates expression of the bilirubin reductase operon (bilQ, bilR and bilS). This chain is HTH-type transcriptional regulator BilQ, found in Clostridium symbiosum (strain WAL-14163).